A 234-amino-acid polypeptide reads, in one-letter code: Thiamine import ATP-binding protein ThiQ (234 aa).

The region spanning 2 to 230 (LRFSDVKYRY…EKPPELTQYL (229 aa)) is the ABC transporter domain. 32–39 (GPSGAGKS) provides a ligand contact to ATP.

Belongs to the ABC transporter superfamily. Thiamine importer (TC 3.A.1.19.1) family. The complex is composed of two ATP-binding proteins (ThiQ), two transmembrane proteins (ThiP) and a solute-binding protein (ThiB).

It is found in the cell inner membrane. It catalyses the reaction thiamine(out) + ATP + H2O = thiamine(in) + ADP + phosphate + H(+). Part of the ABC transporter complex ThiBPQ involved in thiamine import. Responsible for energy coupling to the transport system. The chain is Thiamine import ATP-binding protein ThiQ from Aliivibrio fischeri (strain ATCC 700601 / ES114) (Vibrio fischeri).